Here is a 149-residue protein sequence, read N- to C-terminus: D-aminoacyl-tRNA deacylase (149 aa).

The Gly-cisPro motif, important for rejection of L-amino acids signature appears at 137-138 (GP).

The protein belongs to the DTD family. In terms of assembly, homodimer.

It is found in the cytoplasm. It catalyses the reaction glycyl-tRNA(Ala) + H2O = tRNA(Ala) + glycine + H(+). It carries out the reaction a D-aminoacyl-tRNA + H2O = a tRNA + a D-alpha-amino acid + H(+). Functionally, an aminoacyl-tRNA editing enzyme that deacylates mischarged D-aminoacyl-tRNAs. Also deacylates mischarged glycyl-tRNA(Ala), protecting cells against glycine mischarging by AlaRS. Acts via tRNA-based rather than protein-based catalysis; rejects L-amino acids rather than detecting D-amino acids in the active site. By recycling D-aminoacyl-tRNA to D-amino acids and free tRNA molecules, this enzyme counteracts the toxicity associated with the formation of D-aminoacyl-tRNA entities in vivo and helps enforce protein L-homochirality. The sequence is that of D-aminoacyl-tRNA deacylase from Syntrophobacter fumaroxidans (strain DSM 10017 / MPOB).